We begin with the raw amino-acid sequence, 87 residues long: Large ribosomal subunit protein bL31B (87 aa).

Belongs to the bacterial ribosomal protein bL31 family. Type B subfamily. As to quaternary structure, part of the 50S ribosomal subunit.

This is Large ribosomal subunit protein bL31B from Burkholderia multivorans (strain ATCC 17616 / 249).